The following is a 1507-amino-acid chain: DNA-directed RNA polymerase subunit beta' (1507 aa).

Residues Cys-71, Cys-73, Cys-86, and Cys-89 each coordinate Zn(2+). Positions 470, 472, and 474 each coordinate Mg(2+). Positions 800, 874, 881, and 884 each coordinate Zn(2+).

The protein belongs to the RNA polymerase beta' chain family. In terms of assembly, the RNAP catalytic core consists of 2 alpha, 1 beta, 1 beta' and 1 omega subunit. When a sigma factor is associated with the core the holoenzyme is formed, which can initiate transcription. Mg(2+) is required as a cofactor. Zn(2+) serves as cofactor.

It catalyses the reaction RNA(n) + a ribonucleoside 5'-triphosphate = RNA(n+1) + diphosphate. DNA-dependent RNA polymerase catalyzes the transcription of DNA into RNA using the four ribonucleoside triphosphates as substrates. This Nitratiruptor sp. (strain SB155-2) protein is DNA-directed RNA polymerase subunit beta'.